The chain runs to 684 residues: Beta-taxilin (684 aa).

Residues 1-26 (MEANHSEQLSAERQSTPPGDSSSLPS) show a composition bias toward polar residues. A disordered region spans residues 1–132 (MEANHSEQLS…KEPVSNKEQK (132 aa)). Over residues 45 to 64 (PEKEASVHPDISEELNRQLE) the composition is skewed to basic and acidic residues. Residues 93 to 107 (ESPDNEDGDCEETTE) are compositionally biased toward acidic residues. Coiled-coil stretches lie at residues 135–351 (KKIL…VLKE) and 378–467 (NEVF…SEKD). Over residues 458–475 (IRDAEISEKDDQSQHNSD) the composition is skewed to basic and acidic residues. Disordered stretches follow at residues 458 to 485 (IRDAEISEKDDQSQHNSDEEPESNVSVD), 514 to 632 (ESTP…DVPA), and 646 to 684 (PACEPSRQPPRAAAEELPVGASAGPQPRNVADTNLEGVD). Phosphoserine occurs at positions 474 and 483. Over residues 514–524 (ESTPHQSKETQ) the composition is skewed to basic and acidic residues. Polar residues predominate over residues 613 to 622 (QAPQAPTEAS).

It belongs to the taxilin family. In terms of assembly, binds to the C-terminal coiled coil region of syntaxin family members STX1A, STX3A and STX4A. Has a preference for STX1A. Expressed in skeletal muscle.

In terms of biological role, promotes motor nerve regeneration. May be involved in intracellular vesicle traffic. The protein is Beta-taxilin (TXLNB) of Homo sapiens (Human).